The following is a 460-amino-acid chain: Bifunctional protein GlmU (460 aa).

A pyrophosphorylase region spans residues 1 to 232 (MAISAALILA…PDEIMGVNDR (232 aa)). Residues 9-12 (LAAG), lysine 23, glutamine 75, and 80-81 (GT) each bind UDP-N-acetyl-alpha-D-glucosamine. Aspartate 105 serves as a coordination point for Mg(2+). 4 residues coordinate UDP-N-acetyl-alpha-D-glucosamine: glycine 142, glutamate 157, asparagine 172, and asparagine 230. Asparagine 230 provides a ligand contact to Mg(2+). Residues 233 to 253 (VQLAHAARVLRQRVNLQLMLA) are linker. The N-acetyltransferase stretch occupies residues 254-460 (GVTLIDPDQT…GWCLKKRDNG (207 aa)). Positions 336 and 354 each coordinate UDP-N-acetyl-alpha-D-glucosamine. Catalysis depends on histidine 366, which acts as the Proton acceptor. Positions 369 and 380 each coordinate UDP-N-acetyl-alpha-D-glucosamine. Acetyl-CoA is bound by residues 389 to 390 (NY), serine 408, alanine 426, and arginine 443.

In the N-terminal section; belongs to the N-acetylglucosamine-1-phosphate uridyltransferase family. It in the C-terminal section; belongs to the transferase hexapeptide repeat family. In terms of assembly, homotrimer. Requires Mg(2+) as cofactor.

The protein localises to the cytoplasm. It carries out the reaction alpha-D-glucosamine 1-phosphate + acetyl-CoA = N-acetyl-alpha-D-glucosamine 1-phosphate + CoA + H(+). The enzyme catalyses N-acetyl-alpha-D-glucosamine 1-phosphate + UTP + H(+) = UDP-N-acetyl-alpha-D-glucosamine + diphosphate. It functions in the pathway nucleotide-sugar biosynthesis; UDP-N-acetyl-alpha-D-glucosamine biosynthesis; N-acetyl-alpha-D-glucosamine 1-phosphate from alpha-D-glucosamine 6-phosphate (route II): step 2/2. The protein operates within nucleotide-sugar biosynthesis; UDP-N-acetyl-alpha-D-glucosamine biosynthesis; UDP-N-acetyl-alpha-D-glucosamine from N-acetyl-alpha-D-glucosamine 1-phosphate: step 1/1. It participates in bacterial outer membrane biogenesis; LPS lipid A biosynthesis. Its function is as follows. Catalyzes the last two sequential reactions in the de novo biosynthetic pathway for UDP-N-acetylglucosamine (UDP-GlcNAc). The C-terminal domain catalyzes the transfer of acetyl group from acetyl coenzyme A to glucosamine-1-phosphate (GlcN-1-P) to produce N-acetylglucosamine-1-phosphate (GlcNAc-1-P), which is converted into UDP-GlcNAc by the transfer of uridine 5-monophosphate (from uridine 5-triphosphate), a reaction catalyzed by the N-terminal domain. The protein is Bifunctional protein GlmU of Trichlorobacter lovleyi (strain ATCC BAA-1151 / DSM 17278 / SZ) (Geobacter lovleyi).